Here is a 394-residue protein sequence, read N- to C-terminus: Elongation factor Tu (394 aa).

The tr-type G domain occupies 10-204 (KPHINIGTIG…AVDDNIPTPE (195 aa)). Residues 19–26 (GHVDHGKT) form a G1 region. 19-26 (GHVDHGKT) lines the GTP pocket. Threonine 26 provides a ligand contact to Mg(2+). Residues 60–64 (GITIN) are G2. Positions 81–84 (DCPG) are G3. Residues 81 to 85 (DCPGH) and 136 to 139 (NKVD) each bind GTP. The segment at 136-139 (NKVD) is G4. Residues 174-176 (SAL) form a G5 region.

Belongs to the TRAFAC class translation factor GTPase superfamily. Classic translation factor GTPase family. EF-Tu/EF-1A subfamily. As to quaternary structure, monomer.

It is found in the cytoplasm. It catalyses the reaction GTP + H2O = GDP + phosphate + H(+). Functionally, GTP hydrolase that promotes the GTP-dependent binding of aminoacyl-tRNA to the A-site of ribosomes during protein biosynthesis. The protein is Elongation factor Tu of Chlamydia pneumoniae (Chlamydophila pneumoniae).